Reading from the N-terminus, the 185-residue chain is Large ribosomal subunit protein uL5 (185 aa).

This sequence belongs to the universal ribosomal protein uL5 family. Part of the 50S ribosomal subunit; part of the 5S rRNA/L5/L18/L25 subcomplex. Contacts the 5S rRNA and the P site tRNA. Forms a bridge to the 30S subunit in the 70S ribosome.

This is one of the proteins that bind and probably mediate the attachment of the 5S RNA into the large ribosomal subunit, where it forms part of the central protuberance. In the 70S ribosome it contacts protein S13 of the 30S subunit (bridge B1b), connecting the 2 subunits; this bridge is implicated in subunit movement. Contacts the P site tRNA; the 5S rRNA and some of its associated proteins might help stabilize positioning of ribosome-bound tRNAs. The protein is Large ribosomal subunit protein uL5 of Protochlamydia amoebophila (strain UWE25).